Here is a 245-residue protein sequence, read N- to C-terminus: 4-hydroxy-tetrahydrodipicolinate reductase (245 aa).

Residues 7–12, 75–77, and 102–105 contribute to the NAD(+) site; these read GAKGKV, GTT, and APNF. His132 serves as the catalytic Proton donor/acceptor. His133 is a (S)-2,3,4,5-tetrahydrodipicolinate binding site. Lys136 serves as the catalytic Proton donor. 142-143 serves as a coordination point for (S)-2,3,4,5-tetrahydrodipicolinate; sequence GT.

This sequence belongs to the DapB family.

Its subcellular location is the cytoplasm. It carries out the reaction (S)-2,3,4,5-tetrahydrodipicolinate + NAD(+) + H2O = (2S,4S)-4-hydroxy-2,3,4,5-tetrahydrodipicolinate + NADH + H(+). It catalyses the reaction (S)-2,3,4,5-tetrahydrodipicolinate + NADP(+) + H2O = (2S,4S)-4-hydroxy-2,3,4,5-tetrahydrodipicolinate + NADPH + H(+). It participates in amino-acid biosynthesis; L-lysine biosynthesis via DAP pathway; (S)-tetrahydrodipicolinate from L-aspartate: step 4/4. In terms of biological role, catalyzes the conversion of 4-hydroxy-tetrahydrodipicolinate (HTPA) to tetrahydrodipicolinate. This Mycobacterium sp. (strain JLS) protein is 4-hydroxy-tetrahydrodipicolinate reductase.